The sequence spans 178 residues: Cell division protein ZapC (178 aa).

It belongs to the ZapC family. Interacts directly with FtsZ.

Its subcellular location is the cytoplasm. Its function is as follows. Contributes to the efficiency of the cell division process by stabilizing the polymeric form of the cell division protein FtsZ. Acts by promoting interactions between FtsZ protofilaments and suppressing the GTPase activity of FtsZ. The polypeptide is Cell division protein ZapC (Aeromonas hydrophila subsp. hydrophila (strain ATCC 7966 / DSM 30187 / BCRC 13018 / CCUG 14551 / JCM 1027 / KCTC 2358 / NCIMB 9240 / NCTC 8049)).